The following is a 299-amino-acid chain: GTPase Era (299 aa).

Residues 5–175 form the Era-type G domain; it reads RSGFVCLVGR…IDVLAAALPP (171 aa). The interval 13-20 is G1; that stretch reads GRPNTGKS. 13-20 provides a ligand contact to GTP; that stretch reads GRPNTGKS. Residues 39–43 form a G2 region; that stretch reads QTTRH. The G3 stretch occupies residues 60 to 63; that stretch reads DTPG. GTP contacts are provided by residues 60 to 64 and 124 to 127; these read DTPGL and TKID. The G4 stretch occupies residues 124–127; sequence TKID. The segment at 154 to 156 is G5; it reads VSA. In terms of domain architecture, KH type-2 spans 206-285; the sequence is VRDELPHSLA…YLDLRVKVAK (80 aa).

It belongs to the TRAFAC class TrmE-Era-EngA-EngB-Septin-like GTPase superfamily. Era GTPase family. In terms of assembly, monomer.

It localises to the cell envelope. The protein resides in the secreted. The protein localises to the cell wall. In terms of biological role, exhibits GTPase activity. Binds RNA but is probably not involved in ribosome assembly in mycobacteria. In Mycobacterium avium (strain 104), this protein is GTPase Era.